The primary structure comprises 559 residues: Sporulation protein kinase mde3 (559 aa).

The region spanning 21-323 (YLVKQKLGDG…TAKYCKEVFF (303 aa)) is the Protein kinase domain. Residues 27-35 (LGDGSFGTV) and Lys-53 each bind ATP. The Proton acceptor role is filled by Asp-150.

This sequence belongs to the protein kinase superfamily. Ser/Thr protein kinase family.

The catalysed reaction is L-seryl-[protein] + ATP = O-phospho-L-seryl-[protein] + ADP + H(+). It carries out the reaction L-threonyl-[protein] + ATP = O-phospho-L-threonyl-[protein] + ADP + H(+). Protein kinase which is essential for spore formation. In Schizosaccharomyces pombe (strain 972 / ATCC 24843) (Fission yeast), this protein is Sporulation protein kinase mde3 (mde3).